The following is a 649-amino-acid chain: Endoplasmic reticulum chaperone BiP (649 aa).

A signal peptide spans 1–20 (MGLSTYVGTFLLCILTLSHC). ATP is bound by residues 36-39 (GTTY), Lys-96, 226-228 (GGT), 292-299 (EKAKRTLS), and 363-366 (GSTR). The tract at residues 125–279 (KPYMKVQVGS…KKKEGKDITK (155 aa)) is nucleotide-binding (NBD). Residues 399–499 (VQAGVISGVE…PRGLPQIEVT (101 aa)) are substrate-binding (SBD). The short motif at 646–649 (KEEL) is the Prevents secretion from ER element.

The protein belongs to the heat shock protein 70 family.

It is found in the endoplasmic reticulum lumen. It catalyses the reaction ATP + H2O = ADP + phosphate + H(+). The chaperone activity is regulated by ATP-induced allosteric coupling of the nucleotide-binding (NBD) and substrate-binding (SBD) domains. In the ADP-bound and nucleotide-free (apo) states, the two domains have little interaction. In contrast, in the ATP-bound state the two domains are tightly coupled, which results in drastically accelerated kinetics in both binding and release of polypeptide substrates. J domain-containing co-chaperones stimulate the ATPase activity and are required for efficient substrate recognition. Functionally, endoplasmic reticulum chaperone that plays a key role in protein folding and quality control in the endoplasmic reticulum lumen. Involved in the correct folding of proteins and degradation of misfolded proteins. Acts as a key repressor of the unfolded protein response (UPR). This is Endoplasmic reticulum chaperone BiP from Echinococcus multilocularis (Fox tapeworm).